The primary structure comprises 248 residues: UPF0736 protein BCG9842_B4111 (248 aa).

This sequence belongs to the UPF0736 family.

The chain is UPF0736 protein BCG9842_B4111 from Bacillus cereus (strain G9842).